The chain runs to 358 residues: Methylthioribose-1-phosphate isomerase (358 aa).

Substrate-binding positions include 54–56 (RGA), Arg-96, and Gln-205. Asp-246 acts as the Proton donor in catalysis. 256–257 (NK) provides a ligand contact to substrate.

This sequence belongs to the eIF-2B alpha/beta/delta subunits family. MtnA subfamily.

It carries out the reaction 5-(methylsulfanyl)-alpha-D-ribose 1-phosphate = 5-(methylsulfanyl)-D-ribulose 1-phosphate. Its pathway is amino-acid biosynthesis; L-methionine biosynthesis via salvage pathway; L-methionine from S-methyl-5-thio-alpha-D-ribose 1-phosphate: step 1/6. Functionally, catalyzes the interconversion of methylthioribose-1-phosphate (MTR-1-P) into methylthioribulose-1-phosphate (MTRu-1-P). The chain is Methylthioribose-1-phosphate isomerase from Pseudomonas aeruginosa (strain UCBPP-PA14).